The sequence spans 241 residues: tRNA pseudouridine synthase A (241 aa).

Aspartate 53 functions as the Nucleophile in the catalytic mechanism. Tyrosine 110 contributes to the substrate binding site.

The protein belongs to the tRNA pseudouridine synthase TruA family. Homodimer.

It catalyses the reaction uridine(38/39/40) in tRNA = pseudouridine(38/39/40) in tRNA. Functionally, formation of pseudouridine at positions 38, 39 and 40 in the anticodon stem and loop of transfer RNAs. This is tRNA pseudouridine synthase A from Malacoplasma penetrans (strain HF-2) (Mycoplasma penetrans).